The chain runs to 226 residues: Protein Thf1 (226 aa).

A coiled-coil region spans residues 183–213 (EEKMQKDLDLYRSNLEKMDQLLTVIEEALQA).

This sequence belongs to the THF1 family.

In terms of biological role, may be involved in photosynthetic membrane biogenesis. The sequence is that of Protein Thf1 from Gloeothece citriformis (strain PCC 7424) (Cyanothece sp. (strain PCC 7424)).